A 513-amino-acid chain; its full sequence is GMP synthase [glutamine-hydrolyzing] (513 aa).

Residues 8 to 198 (KIIVLDYGSQ…ALNICGAKGN (191 aa)) enclose the Glutamine amidotransferase type-1 domain. Catalysis depends on Cys-85, which acts as the Nucleophile. Active-site residues include His-172 and Glu-174. A GMPS ATP-PPase domain is found at 199–388 (WSMENFIDMQ…LGMPDEIVWR (190 aa)). Residue 226–232 (SGGVDSS) participates in ATP binding.

As to quaternary structure, homodimer.

It carries out the reaction XMP + L-glutamine + ATP + H2O = GMP + L-glutamate + AMP + diphosphate + 2 H(+). It functions in the pathway purine metabolism; GMP biosynthesis; GMP from XMP (L-Gln route): step 1/1. Its function is as follows. Catalyzes the synthesis of GMP from XMP. In Lactococcus lactis subsp. lactis (strain IL1403) (Streptococcus lactis), this protein is GMP synthase [glutamine-hydrolyzing] (guaA).